Reading from the N-terminus, the 364-residue chain is Ferrochelatase (364 aa).

H211 and E292 together coordinate Fe cation.

Belongs to the ferrochelatase family.

It localises to the cytoplasm. The catalysed reaction is heme b + 2 H(+) = protoporphyrin IX + Fe(2+). It participates in porphyrin-containing compound metabolism; protoheme biosynthesis; protoheme from protoporphyrin-IX: step 1/1. Catalyzes the ferrous insertion into protoporphyrin IX. The protein is Ferrochelatase of Nitrosomonas europaea (strain ATCC 19718 / CIP 103999 / KCTC 2705 / NBRC 14298).